The primary structure comprises 454 residues: Pyrimidine/purine nucleotide 5'-monophosphate nucleosidase (454 aa).

This sequence belongs to the LOG family.

The catalysed reaction is a pyrimidine ribonucleoside 5'-phosphate + H2O = a pyrimidine nucleobase + D-ribose 5-phosphate. The enzyme catalyses AMP + H2O = adenine + D-ribose 5-phosphate. It catalyses the reaction GMP + H2O = guanine + D-ribose 5-phosphate. It carries out the reaction CMP + H2O = cytosine + D-ribose 5-phosphate. The catalysed reaction is IMP + H2O = hypoxanthine + D-ribose 5-phosphate. The enzyme catalyses UMP + H2O = D-ribose 5-phosphate + uracil. It catalyses the reaction dTMP + H2O = 2-deoxy-D-ribose 5-phosphate + thymine. Catalyzes the hydrolysis of the N-glycosidic bond of diverse pyrimidine and purine nucleotide 5'-monophosphates, to form ribose 5-phosphate and the corresponding free base. Can use AMP, GMP, IMP, CMP, dTMP and UMP as substrates. Cannot catalyze the reverse reactions. May contribute to nucleoside pool homeostasis by degrading excess nucleotides and feeding back the ribose moiety to catabolism. This Escherichia coli O157:H7 protein is Pyrimidine/purine nucleotide 5'-monophosphate nucleosidase.